The primary structure comprises 295 residues: Protein U26 (295 aa).

8 consecutive transmembrane segments (helical) span residues 4–24 (LTDSFILGLAKGAVIPGLYTF), 31–51 (SPLGQIGVLITVAISFLLTFK), 66–86 (IVFLSLMAPKLPSLLSAVVMI), 103–123 (VMIMPSYSPAVFTGIMVSLFF), 183–203 (FTVEFLLLFTMLWIGKMFLSM), 218–238 (VFFKLNVFKAAACAVVAILSG), 243–263 (VCLYRIIFEAFVGLGFSSIML), and 274–294 (FYAGDLLNGFFCLVVCCMYFG).

It is found in the membrane. The polypeptide is Protein U26 (U26) (Human herpesvirus 6A (strain Uganda-1102) (HHV-6 variant A)).